The following is a 963-amino-acid chain: Protein NLP2 (963 aa).

The RWP-RK domain occupies 635 to 716 (RRPGEKRRTK…IDSVQGVQGS (82 aa)). The span at 734–755 (MSGTGTSFKNPNAQTENGVSAQ) shows a compositional bias: polar residues. A disordered region spans residues 734 to 794 (MSGTGTSFKN…QSTNTGTTSN (61 aa)). Positions 756-794 (GTAAAPKSPPSSSCSHSSGSSTCCSTGANQSTNTGTTSN) are enriched in low complexity. Residues 862 to 945 (ASKVKATFGE…RTIKISVHEA (84 aa)) enclose the PB1 domain.

It is found in the nucleus. Functionally, probable transcription factor. The polypeptide is Protein NLP2 (NLP2) (Arabidopsis thaliana (Mouse-ear cress)).